The primary structure comprises 1059 residues: Nonsense-mediated mRNA decay factor SMG7 (1059 aa).

TPR repeat units follow at residues 149-183 (DQQS…LGDL) and 184-217 (ARYK…WPAS). The segment covering 806–817 (SHVSPAHSQSTS) has biased composition (polar residues). Disordered regions lie at residues 806-826 (SHVS…KWSP), 927-955 (HLGP…SGNN), 987-1015 (SGKP…QVPT), and 1040-1059 (STQL…RHFV).

Interacts with EXA1. As to expression, expressed in flowers and at lower levels in stems and leaves.

It localises to the cytoplasm. The protein localises to the P-body. Its function is as follows. Plays multiple roles in growth and development. Involved in nonsense-mediated mRNA decay (NMD). May provide a link to the mRNA degradation machinery to initiate NMD and serve as an adapter for UPF proteins function. Required for meiotic progression through anaphase II of pollen mother cells. May counteract cyclin-dependent kinase (CDK) activity at the end of meiosis. May play a role in plant defense through its involvement in NMD. Together with EXA1, helps to restrict cell death induction during pathogen infection in a salicylic acid- (SA) and reactive oxygen species- (ROS) independent manner. This Arabidopsis thaliana (Mouse-ear cress) protein is Nonsense-mediated mRNA decay factor SMG7.